The sequence spans 115 residues: MNPLIQEITKSQLRSDIPSFRPGDSVRVHVRVVEGTRERIQLFEGVVIKRHGVGVSETYTVRKISSGVGVERTFPLHSPRVAKLEVTRHGRVRRAKLYYLRALRGKAARIKEARR.

The protein belongs to the bacterial ribosomal protein bL19 family.

Functionally, this protein is located at the 30S-50S ribosomal subunit interface and may play a role in the structure and function of the aminoacyl-tRNA binding site. The sequence is that of Large ribosomal subunit protein bL19 from Latilactobacillus sakei subsp. sakei (strain 23K) (Lactobacillus sakei subsp. sakei).